A 121-amino-acid chain; its full sequence is Small ribosomal subunit protein uS13 (121 aa).

A disordered region spans residues 95–121 (LPVRGQNTKNNARTRKGKAVAIAGKKK). A compositionally biased stretch (basic residues) spans 106-121 (ARTRKGKAVAIAGKKK).

This sequence belongs to the universal ribosomal protein uS13 family. As to quaternary structure, part of the 30S ribosomal subunit. Forms a loose heterodimer with protein S19. Forms two bridges to the 50S subunit in the 70S ribosome.

In terms of biological role, located at the top of the head of the 30S subunit, it contacts several helices of the 16S rRNA. In the 70S ribosome it contacts the 23S rRNA (bridge B1a) and protein L5 of the 50S subunit (bridge B1b), connecting the 2 subunits; these bridges are implicated in subunit movement. Contacts the tRNAs in the A and P-sites. The polypeptide is Small ribosomal subunit protein uS13 (Streptococcus equi subsp. zooepidemicus (strain H70)).